Consider the following 166-residue polypeptide: PTS system glucose-specific EIIA component (166 aa).

The PTS EIIA type-1 domain occupies 34–138 (DPVFAQKMMG…SIISPIIITN (105 aa)). The Zn(2+) site is built by His-71 and His-86. His-86 serves as the catalytic Tele-phosphohistidine intermediate; for EIIA activity. His-86 is modified (phosphohistidine; by HPr).

Heterodimer with glycerol kinase (glpk). It depends on Zn(2+) as a cofactor.

It localises to the cytoplasm. In terms of biological role, the phosphoenolpyruvate-dependent sugar phosphotransferase system (sugar PTS), a major carbohydrate active transport system, catalyzes the phosphorylation of incoming sugar substrates concomitantly with their translocation across the cell membrane. The enzyme II complex composed of PtsG and Crr is involved in glucose transport. This chain is PTS system glucose-specific EIIA component (crr), found in Staphylococcus epidermidis (strain ATCC 35984 / DSM 28319 / BCRC 17069 / CCUG 31568 / BM 3577 / RP62A).